The following is an 83-amino-acid chain: Probable calcium-binding protein CML29 (83 aa).

EF-hand domains follow at residues 5 to 40 and 43 to 75; these read TEKAEHDRIFKKFDANGDGKISAAELEEALKTLGSV and DDVKRMMAEIDTDGDGNISYQEFTDFAGANRGL. Positions 18, 20, 22, 24, 29, 53, 55, 57, 59, and 64 each coordinate Ca(2+).

Its function is as follows. Potential calcium sensor. The sequence is that of Probable calcium-binding protein CML29 (CML29) from Arabidopsis thaliana (Mouse-ear cress).